A 217-amino-acid chain; its full sequence is Nucleoside diphosphate-linked moiety X motif 6 (217 aa).

The region spanning 42-177 (THQVGVAGAV…VAKLLLYGYN (136 aa)) is the Nudix hydrolase domain. The Nudix box signature appears at 77–98 (GLSDQGEDIGATAVREVLEETG).

The protein belongs to the Nudix hydrolase family. As to expression, detected in liver (at protein level).

Its subcellular location is the cytoplasm. The protein resides in the nucleus. It is found in the mitochondrion. May contribute to the regulation of cell proliferation. The polypeptide is Nucleoside diphosphate-linked moiety X motif 6 (nudt6) (Xenopus laevis (African clawed frog)).